The chain runs to 260 residues: MIKIHALEEVKGNSKEIVEKEFENLANELKEKYNAKLKYVDEDIEEDENLKFYTKIGEFEINFDNFKDYINFCLKYGADIEVIKPEKLKLTANEINEVLALVISAFKSFMDTYKIGFDVYVKEKKDIDVEGYKKGKYDEDEIADFEEEGFIRVKAVFEAIGKNENEVVKNLLISLDRDEIIINKIITKNFNENNENFNGLMAVDLLCNPFEMFEIAYKYLPVAISIQRDEIELSLADIQDIGNELSGAMFELSHAVIMRK.

This is an uncharacterized protein from Methanocaldococcus jannaschii (strain ATCC 43067 / DSM 2661 / JAL-1 / JCM 10045 / NBRC 100440) (Methanococcus jannaschii).